A 1005-amino-acid chain; its full sequence is Beta/gamma crystallin domain-containing protein 3 (1005 aa).

S122, S129, S130, S136, and S140 each carry phosphoserine. 2 disordered regions span residues 132–159 (EDVL…PSSV) and 173–198 (NFDG…DWRT). Positions 180-189 (QEAEEEEEEA) are enriched in acidic residues. 9 Beta/gamma crystallin 'Greek key' domains span residues 367-416 (GCWI…KRVL), 462-500 (GVWL…HPLQ), 512-556 (LKVI…RVIG), 557-599 (GVWV…RYLQ), 605-647 (SSIT…HVKS), 648-690 (GVWV…RPIQ), 701-737 (HLLK…KVLR), 738-781 (GCWL…QPID), and 828-869 (GLWI…RPMK). The region spanning 871–1003 (PAVYIRIRNR…GEETQKWDIE (133 aa)) is the Ricin B-type lectin domain.

Belongs to the beta/gamma-crystallin family.

The sequence is that of Beta/gamma crystallin domain-containing protein 3 (Crybg3) from Mus musculus (Mouse).